The chain runs to 204 residues: N-(5'-phosphoribosyl)anthranilate isomerase (204 aa).

The protein belongs to the TrpF family.

The catalysed reaction is N-(5-phospho-beta-D-ribosyl)anthranilate = 1-(2-carboxyphenylamino)-1-deoxy-D-ribulose 5-phosphate. Its pathway is amino-acid biosynthesis; L-tryptophan biosynthesis; L-tryptophan from chorismate: step 3/5. This is N-(5'-phosphoribosyl)anthranilate isomerase from Geobacter sp. (strain M21).